The following is a 551-amino-acid chain: Solute carrier family 22 member 6 (551 aa).

Residues 1 to 9 (MAFNDLLKQ) are Cytoplasmic-facing. A helical membrane pass occupies residues 10-30 (VGGVGRFQLIQVTMVVAPLLL). Over 31-135 (MASHNTLQNF…LVCSHRAFRQ (105 aa)) the chain is Extracellular. Residues asparagine 39, asparagine 56, asparagine 92, and asparagine 113 are each glycosylated (N-linked (GlcNAc...) asparagine). Residues 136 to 156 (LAQSLYMVGVLLGAMVFGYLA) form a helical membrane-spanning segment. The Cytoplasmic segment spans residues 157–164 (DRLGRRKV). Residues 165-187 (LILNYLQTAVSGTCAAYAPNYTV) traverse the membrane as a helical segment. Residues 188–195 (YCVFRLLS) are Extracellular-facing. A helical membrane pass occupies residues 196-216 (GMSLASIAINCMTLNVEWMPI). Residues 217–224 (HTRAYVGT) are Cytoplasmic-facing. Residues 225–245 (LIGYVYSLGQFLLAGIAYAVP) traverse the membrane as a helical segment. The Extracellular segment spans residues 246–248 (HWR). Residues 249-269 (HLQLVVSVPFFIAFIYSWFFI) traverse the membrane as a helical segment. The Cytoplasmic segment spans residues 270-337 (ESARWYSSSG…ELLRCPTLRH (68 aa)). Residues 338–358 (LFLCLSMLWFATSFAYYGLVM) form a helical membrane-spanning segment. Residues 359 to 368 (DLQGFGVSMY) are Extracellular-facing. Residues 369-389 (LIQVIFGAVDLPAKFVCFLVI) traverse the membrane as a helical segment. Over 390 to 395 (NSMGRR) the chain is Cytoplasmic. A helical membrane pass occupies residues 396–416 (PAQMASLLLAGICILVNGIIP). The Extracellular segment spans residues 417–425 (KSHTIIRTS). Residues 426-446 (LAVLGKGCLASSFNCIFLYTG) traverse the membrane as a helical segment. The Cytoplasmic portion of the chain corresponds to 447-484 (ELYPTVIRQTGLGMGSTMARVGSIVSPLVSMTAEFYPS). The helical transmembrane segment at 485–505 (MPLFIFGAVPVVASAVTALLP) threads the bilayer. The Extracellular segment spans residues 506–551 (ETLGQPLPDTVQDLKSRSRGKQNQQQQEQQKQMMPLQASTQEKNGL). Residues 514–551 (DTVQDLKSRSRGKQNQQQQEQQKQMMPLQASTQEKNGL) are disordered. The segment covering 526–537 (KQNQQQQEQQKQ) has biased composition (low complexity). Polar residues predominate over residues 542–551 (QASTQEKNGL).

The protein belongs to the major facilitator (TC 2.A.1) superfamily. Organic cation transporter (TC 2.A.1.19) family. In terms of processing, glycosylated. Glycosylation is necessary for proper targeting of the transporter to the plasma membrane. In terms of tissue distribution, highly expressed in kidney; in the particular segment of the proximal tubule. In kidney, found preferentially in the cortex and outer medulla and weakly in the inner medulla. Expressed to a lower extent in brain.

The protein localises to the cell membrane. Its subcellular location is the basolateral cell membrane. The protein resides in the basal cell membrane. The catalysed reaction is (6R)-L-erythro-5,6,7,8-tetrahydrobiopterin(out) + a dicarboxylate(in) = (6R)-L-erythro-5,6,7,8-tetrahydrobiopterin(in) + a dicarboxylate(out). It catalyses the reaction L-erythro-7,8-dihydrobiopterin(out) + a dicarboxylate(in) = L-erythro-7,8-dihydrobiopterin(in) + a dicarboxylate(out). It carries out the reaction L-sepiapterin(out) + a dicarboxylate(in) = L-sepiapterin(in) + a dicarboxylate(out). The enzyme catalyses prostaglandin F2alpha(out) + a dicarboxylate(in) = prostaglandin F2alpha(in) + a dicarboxylate(out). The catalysed reaction is prostaglandin E2(out) + a dicarboxylate(in) = prostaglandin E2(in) + a dicarboxylate(out). It catalyses the reaction 3',5'-cyclic AMP(out) + a dicarboxylate(in) = 3',5'-cyclic AMP(in) + a dicarboxylate(out). It carries out the reaction 3',5'-cyclic GMP(out) + a dicarboxylate(in) = 3',5'-cyclic GMP(in) + a dicarboxylate(out). The enzyme catalyses urate(out) + a dicarboxylate(in) = urate(in) + a dicarboxylate(out). The catalysed reaction is kynurenate(out) + glutarate(in) = kynurenate(in) + glutarate(out). It catalyses the reaction (indol-3-yl)acetate(out) + a dicarboxylate(in) = (indol-3-yl)acetate(in) + a dicarboxylate(out). It carries out the reaction indoxyl sulfate(out) + a dicarboxylate(in) = indoxyl sulfate(in) + a dicarboxylate(out). The enzyme catalyses N-benzoylglycine(out) + a dicarboxylate(in) = N-benzoylglycine(in) + a dicarboxylate(out). The catalysed reaction is 3-carboxy-4-methyl-5-propyl-2-furanpropanoate(out) + a dicarboxylate(in) = 3-carboxy-4-methyl-5-propyl-2-furanpropanoate(in) + a dicarboxylate(out). Secondary active transporter that functions as a Na(+)-independent organic anion (OA)/dicarboxylate antiporter where the uptake of one molecule of OA into the cell is coupled with an efflux of one molecule of intracellular dicarboxylate such as alpha-ketoglutarate or glutarate. Mediates the uptake of OA across the basolateral side of proximal tubule epithelial cells, thereby contributing to the renal elimination of endogenous OA from the systemic circulation into the urine. Function as a biopterin transporters involved in the uptake and the secretion of coenzymes tetrahydrobiopterin (BH4) dihydrobiopterin (BH2) and sepiapterin to urine, thereby determining baseline levels of blood biopterins. Transports prostaglandin E2 (PGE2) and prostaglandin F2-alpha (PGF2-alpha) and may contribute to their renal excretion. Also mediates the uptake of cyclic nucleotides such as cAMP and cGMP. Involved in the transport of neuroactive tryptophan metabolites kynurenate (KYNA) and xanthurenate (XA) and may contribute to their secretion from the brain. May transport glutamate. Also involved in the disposition of uremic toxins and potentially toxic xenobiotics by the renal organic anion secretory pathway, helping reduce their undesired toxicological effects on the body. Uremic toxins include the indoxyl sulfate (IS), hippurate, indole acetate (IA), 3-carboxy-4- methyl-5-propyl-2-furanpropionate(CMPF) and urate. Xenobiotics include the mycotoxin ochratoxin (OTA). May also contribute to the transport of organic compounds in testes across the blood-testis-barrier. May also work as a bidirectional OA/dicarboxylate exchanger. In Rattus norvegicus (Rat), this protein is Solute carrier family 22 member 6.